The chain runs to 277 residues: Hemin import ATP-binding protein HmuV (277 aa).

The ABC transporter domain maps to 25 to 260 (IHAQGLNLIL…DIIERVYGWP (236 aa)). 57 to 64 (GPNGAGKS) lines the ATP pocket.

Belongs to the ABC transporter superfamily. Heme (hemin) importer (TC 3.A.1.14.5) family. In terms of assembly, the complex is composed of two ATP-binding proteins (HmuV), two transmembrane proteins (HmuU) and a solute-binding protein (HmuT).

The protein localises to the cell inner membrane. In terms of biological role, part of the ABC transporter complex HmuTUV involved in hemin import. Responsible for energy coupling to the transport system. The sequence is that of Hemin import ATP-binding protein HmuV from Photobacterium profundum (strain SS9).